The primary structure comprises 373 residues: Glutamine synthetase (373 aa).

Thr-2 is modified (N-acetylthreonine). Residues 2–25 (TTSASSHLNKGIKQVYMSLPQGEK) form a required for glutamine-induced ubiquitination by CRL4(CRBN) and proteasomal degradation region. 2 positions are modified to N6-acetyllysine; by EP300: Lys-11 and Lys-14. Residues 24–106 (EKVQAMYIWI…VLCEVFKYNR (83 aa)) enclose the GS beta-grasp domain. Tyr-104 is modified (phosphotyrosine). Residues 113–373 (LRHTCKRIMD…TGDEPFQYKN (261 aa)) enclose the GS catalytic domain. Glu-134 contributes to the ATP binding site. Mn(2+) is bound by residues Glu-134, Glu-136, Glu-196, and Glu-203. 203–208 (EFQIGP) provides a ligand contact to ATP. Position 246-247 (246-247 (NW)) interacts with L-glutamate. His-253 contacts Mn(2+). Residues 255 to 257 (NFS), Arg-319, and Arg-324 contribute to the ATP site. Arg-319 is a binding site for L-glutamate. 336–338 (YFE) provides a ligand contact to ADP. Glu-338 contributes to the Mn(2+) binding site. Arg-340 serves as a coordination point for L-glutamate. Phosphoserine is present on Ser-343.

It belongs to the glutamine synthetase family. In terms of assembly, decamer; composed of two pentamers. Interacts with PALMD. Interacts with RHOJ. Interacts with BEST2; this interaction tethers a fraction of GLUL to the membrane, causing a decrease of cytosolic glutamine synthase (GS) activity and inhibits the chloride channel activity of BEST2 by affecting the gating at the aperture in the absence of intracellular glutamate. Requires Mg(2+) as cofactor. The cofactor is Mn(2+). Post-translationally, acetylated by EP300/p300; acetylation is stimulated by increased glutamine levels and promotes ubiquitin-mediated proteasomal degradation. In terms of processing, palmitoylated; undergoes autopalmitoylation. Ubiquitinated by ZNRF1. Ubiquitinated by the DCX (DDB1-CUL4-X-box) E3 ubiquitin-protein ligase complex called CRL4(CRBN), leading to proteasomal degradation. As to expression, expressed in endothelial cells.

It localises to the cytoplasm. It is found in the cytosol. Its subcellular location is the microsome. The protein resides in the mitochondrion. The protein localises to the cell membrane. It carries out the reaction L-glutamate + NH4(+) + ATP = L-glutamine + ADP + phosphate + H(+). It catalyses the reaction L-cysteinyl-[protein] + hexadecanoyl-CoA = S-hexadecanoyl-L-cysteinyl-[protein] + CoA. Its activity is regulated as follows. Glutamine synthetase activity is inhibited by methionine sulfoximine (MSO). In terms of biological role, glutamine synthetase that catalyzes the ATP-dependent conversion of glutamate and ammonia to glutamine. Its role depends on tissue localization: in the brain, it regulates the levels of toxic ammonia and converts neurotoxic glutamate to harmless glutamine, whereas in the liver, it is one of the enzymes responsible for the removal of ammonia. Plays a key role in ammonium detoxification during erythropoiesis: the glutamine synthetase activity is required to remove ammonium generated by porphobilinogen deaminase (HMBS) during heme biosynthesis to prevent ammonium accumulation and oxidative stress. Essential for proliferation of fetal skin fibroblasts. Independently of its glutamine synthetase activity, required for endothelial cell migration during vascular development: acts by regulating membrane localization and activation of the GTPase RHOJ, possibly by promoting RHOJ palmitoylation. May act as a palmitoyltransferase for RHOJ: able to autopalmitoylate and then transfer the palmitoyl group to RHOJ. Plays a role in ribosomal 40S subunit biogenesis. Through the interaction with BEST2, inhibits BEST2 channel activity by affecting the gating at the aperture in the absence of intracellular L-glutamate, but sensitizes BEST2 to intracellular L-glutamate, which promotes the opening of BEST2 and thus relieves its inhibitory effect on BEST2. The polypeptide is Glutamine synthetase (Homo sapiens (Human)).